Reading from the N-terminus, the 297-residue chain is Acetyl-coenzyme A carboxylase carboxyl transferase subunit beta (297 aa).

Residues 27-296 (LWHKCPSCEA…PEQAREAAAV (270 aa)) enclose the CoA carboxyltransferase N-terminal domain. Residues C31, C34, C50, and C53 each coordinate Zn(2+). Residues 31-53 (CPSCEAVLYRPELEKTLDVCPKC) form a C4-type zinc finger.

This sequence belongs to the AccD/PCCB family. In terms of assembly, acetyl-CoA carboxylase is a heterohexamer composed of biotin carboxyl carrier protein (AccB), biotin carboxylase (AccC) and two subunits each of ACCase subunit alpha (AccA) and ACCase subunit beta (AccD). Zn(2+) serves as cofactor.

Its subcellular location is the cytoplasm. It catalyses the reaction N(6)-carboxybiotinyl-L-lysyl-[protein] + acetyl-CoA = N(6)-biotinyl-L-lysyl-[protein] + malonyl-CoA. It functions in the pathway lipid metabolism; malonyl-CoA biosynthesis; malonyl-CoA from acetyl-CoA: step 1/1. In terms of biological role, component of the acetyl coenzyme A carboxylase (ACC) complex. Biotin carboxylase (BC) catalyzes the carboxylation of biotin on its carrier protein (BCCP) and then the CO(2) group is transferred by the transcarboxylase to acetyl-CoA to form malonyl-CoA. This is Acetyl-coenzyme A carboxylase carboxyl transferase subunit beta from Pseudomonas putida (strain GB-1).